The following is a 461-amino-acid chain: Argininosuccinate lyase (461 aa).

The protein belongs to the lyase 1 family. Argininosuccinate lyase subfamily.

It localises to the cytoplasm. It carries out the reaction 2-(N(omega)-L-arginino)succinate = fumarate + L-arginine. Its pathway is amino-acid biosynthesis; L-arginine biosynthesis; L-arginine from L-ornithine and carbamoyl phosphate: step 3/3. In Dehalococcoides mccartyi (strain ATCC BAA-2266 / KCTC 15142 / 195) (Dehalococcoides ethenogenes (strain 195)), this protein is Argininosuccinate lyase.